The chain runs to 483 residues: Protein disulfide-isomerase 5-3 (483 aa).

N-linked (GlcNAc...) asparagine glycans are attached at residues Asn53, Asn74, and Asn99. Positions 133–263 (EETKEEFPDG…IVKMVEGLVA (131 aa)) constitute a Thioredoxin domain. The active-site Nucleophile is the Cys170. N-linked (GlcNAc...) asparagine glycosylation is found at Asn279, Asn326, and Asn376. Residues 442 to 462 (FSHFITNLCAIIGGVFTVAGI) traverse the membrane as a helical segment.

Belongs to the protein disulfide isomerase family. As to expression, widely expressed.

The protein localises to the membrane. Its function is as follows. Acts as a protein-folding catalyst that interacts with nascent polypeptides to catalyze the formation, isomerization, and reduction or oxidation of disulfide bonds. This chain is Protein disulfide-isomerase 5-3 (PDIL5-3), found in Arabidopsis thaliana (Mouse-ear cress).